We begin with the raw amino-acid sequence, 230 residues long: Spliceosome-associated protein CWC15 homolog (230 aa).

Disordered stretches follow at residues 1–157 (MTTA…EEKQ) and 164–183 (AGNP…GGDF). The span at 25–34 (KLSNQYSSKD) shows a compositional bias: polar residues. Coiled coils occupy residues 47–82 (GQET…SASS) and 119–164 (DSDE…NILA). The span at 52–78 (ADLRKKDLRRELEDKERNAIREKRARD) shows a compositional bias: basic and acidic residues. The span at 104-125 (DADEAVDELNSSDDDDSDEDDT) shows a compositional bias: acidic residues. A compositionally biased stretch (basic and acidic residues) spans 131 to 157 (ELEKIKKERAEEKAARDEEIKEKEEKQ).

The protein belongs to the CWC15 family. In terms of assembly, component of spliceosomal complex.

The protein localises to the nucleus. Component of a spliceosomal complex that is required for activating pre-mRNA splicing. The polypeptide is Spliceosome-associated protein CWC15 homolog (Caenorhabditis elegans).